Here is a 361-residue protein sequence, read N- to C-terminus: Very-long-chain 3-oxoacyl-CoA reductase (361 aa).

Residues 32–52 (PALILSTVGAAFLLRYTLSIF) traverse the membrane as a helical segment. 8 residues coordinate NADP(+): V79, D133, N163, R198, Y236, K240, V269, and S271. The active-site Proton donor is the Y236. The Lowers pKa of active site Tyr role is filled by K240.

Belongs to the short-chain dehydrogenases/reductases (SDR) family.

It localises to the endoplasmic reticulum membrane. The enzyme catalyses a very-long-chain (3R)-3-hydroxyacyl-CoA + NADP(+) = a very-long-chain 3-oxoacyl-CoA + NADPH + H(+). The protein operates within lipid metabolism; fatty acid biosynthesis. In terms of biological role, component of the microsomal membrane bound fatty acid elongation system, which produces the 26-carbon very long-chain fatty acids (VLCFA) from palmitate. Catalyzes the reduction of the 3-ketoacyl-CoA intermediate that is formed in each cycle of fatty acid elongation. VLCFAs serve as precursors for ceramide and sphingolipids. This is Very-long-chain 3-oxoacyl-CoA reductase from Cryptococcus neoformans var. neoformans serotype D (strain B-3501A) (Filobasidiella neoformans).